A 293-amino-acid polypeptide reads, in one-letter code: Homoserine kinase (293 aa).

Residue 84–94 (PFSRGLGSSSS) coordinates ATP.

The protein belongs to the GHMP kinase family. Homoserine kinase subfamily.

The protein resides in the cytoplasm. The catalysed reaction is L-homoserine + ATP = O-phospho-L-homoserine + ADP + H(+). The protein operates within amino-acid biosynthesis; L-threonine biosynthesis; L-threonine from L-aspartate: step 4/5. Catalyzes the ATP-dependent phosphorylation of L-homoserine to L-homoserine phosphate. In Campylobacter fetus subsp. fetus (strain 82-40), this protein is Homoserine kinase.